The following is a 192-amino-acid chain: ATP-dependent Clp protease proteolytic subunit 1 (192 aa).

Ser92 serves as the catalytic Nucleophile. The active site involves His117.

Belongs to the peptidase S14 family. As to quaternary structure, fourteen ClpP subunits assemble into 2 heptameric rings which stack back to back to give a disk-like structure with a central cavity, resembling the structure of eukaryotic proteasomes.

It localises to the cytoplasm. It carries out the reaction Hydrolysis of proteins to small peptides in the presence of ATP and magnesium. alpha-casein is the usual test substrate. In the absence of ATP, only oligopeptides shorter than five residues are hydrolyzed (such as succinyl-Leu-Tyr-|-NHMec, and Leu-Tyr-Leu-|-Tyr-Trp, in which cleavage of the -Tyr-|-Leu- and -Tyr-|-Trp bonds also occurs).. In terms of biological role, cleaves peptides in various proteins in a process that requires ATP hydrolysis. Has a chymotrypsin-like activity. Plays a major role in the degradation of misfolded proteins. This Chlamydia trachomatis serovar D (strain ATCC VR-885 / DSM 19411 / UW-3/Cx) protein is ATP-dependent Clp protease proteolytic subunit 1.